The sequence spans 31 residues: Kunitz-type serine protease inhibitor RsTIQ2 (31 aa).

The region spanning 1–31 (EAVDFDSQCVPTADPGKCKFYFPMWNVNVFT) is the BPTI/Kunitz inhibitor domain.

Its function is as follows. Serine protease inhibitor. Inhibits trypsin, elastase, plasmin and kallikrein. This Rhipicephalus sanguineus (Brown dog tick) protein is Kunitz-type serine protease inhibitor RsTIQ2.